Here is a 205-residue protein sequence, read N- to C-terminus: Small ribosomal subunit protein uS4 (205 aa).

The tract at residues 26-46 (PVNRREYGPGQHGQRRKQKPS) is disordered. Positions 94–157 (RRLDAVVYRL…KQLAIVLDAV (64 aa)) constitute an S4 RNA-binding domain.

It belongs to the universal ribosomal protein uS4 family. As to quaternary structure, part of the 30S ribosomal subunit. Contacts protein S5. The interaction surface between S4 and S5 is involved in control of translational fidelity.

Functionally, one of the primary rRNA binding proteins, it binds directly to 16S rRNA where it nucleates assembly of the body of the 30S subunit. With S5 and S12 plays an important role in translational accuracy. This is Small ribosomal subunit protein uS4 from Gluconobacter oxydans (strain 621H) (Gluconobacter suboxydans).